The primary structure comprises 719 residues: Polyphosphate kinase (719 aa).

Asn-54 contacts ATP. Mg(2+) contacts are provided by Arg-379 and Arg-409. The 35-residue stretch at Thr-434–Thr-468 folds into the PLD phosphodiesterase domain. Catalysis depends on His-439, which acts as the Phosphohistidine intermediate. ATP is bound by residues Tyr-472, Arg-568, and His-596.

The protein belongs to the polyphosphate kinase 1 (PPK1) family. It depends on Mg(2+) as a cofactor. An intermediate of this reaction is the autophosphorylated ppk in which a phosphate is covalently linked to a histidine residue through a N-P bond.

The catalysed reaction is [phosphate](n) + ATP = [phosphate](n+1) + ADP. Its function is as follows. Catalyzes the reversible transfer of the terminal phosphate of ATP to form a long-chain polyphosphate (polyP). The chain is Polyphosphate kinase from Staphylococcus saprophyticus subsp. saprophyticus (strain ATCC 15305 / DSM 20229 / NCIMB 8711 / NCTC 7292 / S-41).